The sequence spans 554 residues: Dihydroxy-acid dehydratase (554 aa).

Asp-78 contacts Mg(2+). [2Fe-2S] cluster is bound at residue Cys-119. Positions 120 and 121 each coordinate Mg(2+). Lys-121 carries the N6-carboxylysine modification. [2Fe-2S] cluster is bound at residue Cys-191. Glu-442 provides a ligand contact to Mg(2+). Ser-468 (proton acceptor) is an active-site residue.

Belongs to the IlvD/Edd family. Homodimer. It depends on [2Fe-2S] cluster as a cofactor. The cofactor is Mg(2+).

The enzyme catalyses (2R)-2,3-dihydroxy-3-methylbutanoate = 3-methyl-2-oxobutanoate + H2O. It carries out the reaction (2R,3R)-2,3-dihydroxy-3-methylpentanoate = (S)-3-methyl-2-oxopentanoate + H2O. It functions in the pathway amino-acid biosynthesis; L-isoleucine biosynthesis; L-isoleucine from 2-oxobutanoate: step 3/4. It participates in amino-acid biosynthesis; L-valine biosynthesis; L-valine from pyruvate: step 3/4. Functionally, functions in the biosynthesis of branched-chain amino acids. Catalyzes the dehydration of (2R,3R)-2,3-dihydroxy-3-methylpentanoate (2,3-dihydroxy-3-methylvalerate) into 2-oxo-3-methylpentanoate (2-oxo-3-methylvalerate) and of (2R)-2,3-dihydroxy-3-methylbutanoate (2,3-dihydroxyisovalerate) into 2-oxo-3-methylbutanoate (2-oxoisovalerate), the penultimate precursor to L-isoleucine and L-valine, respectively. This chain is Dihydroxy-acid dehydratase, found in Hydrogenobaculum sp. (strain Y04AAS1).